A 144-amino-acid chain; its full sequence is Cytochrome c oxidase subunit 4 isoform 1, mitochondrial (144 aa).

The Mitochondrial matrix segment spans residues 1–73 (SVVKSEDYTL…SFAEMNRGSN (73 aa)). Lys-4 carries the post-translational modification N6-acetyllysine; alternate. Lys-4 carries the post-translational modification N6-succinyllysine; alternate. A phosphoserine mark is found at Ser-31 and Ser-33. Residue Lys-35 is modified to N6-acetyllysine; alternate. N6-succinyllysine; alternate is present on Lys-35. Lys-42 carries the post-translational modification N6-acetyllysine. The helical transmembrane segment at 74-99 (EWKTVVGAAMFFIGFTAILIMLEKRY) threads the bilayer. The Mitochondrial intermembrane segment spans residues 100–144 (VYGPLPHTFDKEWVAMQTKRMLDLKVNPVDGLASKWDYEKKEWKK).

This sequence belongs to the cytochrome c oxidase IV family. In terms of assembly, component of the cytochrome c oxidase (complex IV, CIV), a multisubunit enzyme composed of 14 subunits. The complex is composed of a catalytic core of 3 subunits MT-CO1, MT-CO2 and MT-CO3, encoded in the mitochondrial DNA, and 11 supernumerary subunits COX4I, COX5A, COX5B, COX6A, COX6B, COX6C, COX7A, COX7B, COX7C, COX8 and NDUFA4, which are encoded in the nuclear genome. The complex exists as a monomer or a dimer and forms supercomplexes (SCs) in the inner mitochondrial membrane with NADH-ubiquinone oxidoreductase (complex I, CI) and ubiquinol-cytochrome c oxidoreductase (cytochrome b-c1 complex, complex III, CIII), resulting in different assemblies (supercomplex SCI(1)III(2)IV(1) and megacomplex MCI(2)III(2)IV(2)). Interacts with PHB2; the interaction decreases in absence of SPHK2. Interacts with AFG1L. Interacts with ABCB7; this interaction allows the regulation of cellular iron homeostasis and cellular reactive oxygen species (ROS) levels in cardiomyocytes. Interacts with FLVCR2; this interaction occurs in the absence of heme and is disrupted upon heme binding. Interacts with IRGC.

Its subcellular location is the mitochondrion inner membrane. The protein operates within energy metabolism; oxidative phosphorylation. Its function is as follows. Component of the cytochrome c oxidase, the last enzyme in the mitochondrial electron transport chain which drives oxidative phosphorylation. The respiratory chain contains 3 multisubunit complexes succinate dehydrogenase (complex II, CII), ubiquinol-cytochrome c oxidoreductase (cytochrome b-c1 complex, complex III, CIII) and cytochrome c oxidase (complex IV, CIV), that cooperate to transfer electrons derived from NADH and succinate to molecular oxygen, creating an electrochemical gradient over the inner membrane that drives transmembrane transport and the ATP synthase. Cytochrome c oxidase is the component of the respiratory chain that catalyzes the reduction of oxygen to water. Electrons originating from reduced cytochrome c in the intermembrane space (IMS) are transferred via the dinuclear copper A center (CU(A)) of subunit 2 and heme A of subunit 1 to the active site in subunit 1, a binuclear center (BNC) formed by heme A3 and copper B (CU(B)). The BNC reduces molecular oxygen to 2 water molecules using 4 electrons from cytochrome c in the IMS and 4 protons from the mitochondrial matrix. This chain is Cytochrome c oxidase subunit 4 isoform 1, mitochondrial (COX4I1), found in Pithecia pithecia (White-faced saki).